The primary structure comprises 561 residues: Putative transport protein YbjL (561 aa).

Transmembrane regions (helical) follow at residues 8 to 28 (LLNG…LCLG), 32 to 52 (LGSI…LLGQ), 66 to 86 (FMLF…SIFF), 94 to 114 (MLAL…GKLF), and 158 to 178 (NLSL…IVGA). 2 RCK C-terminal domains span residues 200–288 (RGLD…SFRN) and 292–373 (VFDR…RIGF). A run of 5 helical transmembrane segments spans residues 383 to 403 (LLAF…TFQF), 406 to 426 (FSFG…LGFM), 451 to 471 (VFMA…LGAI), 475 to 495 (MLIA…LFGA), and 540 to 560 (AIAN…WPGL).

Belongs to the AAE transporter (TC 2.A.81) family. YbjL subfamily.

It is found in the cell membrane. The protein is Putative transport protein YbjL of Shigella flexneri.